The primary structure comprises 363 residues: MTVKPEGRKMLRIEKKNAESPIEQKPRWIRNQVRTGPGYEDMKSRVTGASLHTVCQEAGCPNIHECWESREATFLIGGDKCTRRCDFCDIATGKPAELDRDEPRRVAENIQEMDLNYTTITGVTRDDLPDEGAWLYAEVVRKIHELNPNTGVENLTPDFSGKPDLLQEVFEARPEVFAHNLETVPRIFKRIRPAFRYERSLDVIRQAHDFGLITKSNLILGMGETAEEIEEALRDLRSAGCDIITITQYLRPGPRFHPIERWVRPEEFVEHSKLAKELGFGGVMSGPLVRSSYRAGRLYVQAMEARGLELPENLKHLAETSQGATAQEASTLLEKYGPSEETPVTTRMAKTPAQSNSVAATIR.

Positions 55, 60, 66, 81, 85, 88, and 292 each coordinate [4Fe-4S] cluster. The Radical SAM core domain occupies 67–281; the sequence is WESREATFLI…SKLAKELGFG (215 aa). The tract at residues 338–363 is disordered; that stretch reads PSEETPVTTRMAKTPAQSNSVAATIR. Positions 352-363 are enriched in polar residues; sequence PAQSNSVAATIR.

The protein belongs to the radical SAM superfamily. Lipoyl synthase family. [4Fe-4S] cluster is required as a cofactor.

Its subcellular location is the cytoplasm. The catalysed reaction is [[Fe-S] cluster scaffold protein carrying a second [4Fe-4S](2+) cluster] + N(6)-octanoyl-L-lysyl-[protein] + 2 oxidized [2Fe-2S]-[ferredoxin] + 2 S-adenosyl-L-methionine + 4 H(+) = [[Fe-S] cluster scaffold protein] + N(6)-[(R)-dihydrolipoyl]-L-lysyl-[protein] + 4 Fe(3+) + 2 hydrogen sulfide + 2 5'-deoxyadenosine + 2 L-methionine + 2 reduced [2Fe-2S]-[ferredoxin]. It participates in protein modification; protein lipoylation via endogenous pathway; protein N(6)-(lipoyl)lysine from octanoyl-[acyl-carrier-protein]: step 2/2. Catalyzes the radical-mediated insertion of two sulfur atoms into the C-6 and C-8 positions of the octanoyl moiety bound to the lipoyl domains of lipoate-dependent enzymes, thereby converting the octanoylated domains into lipoylated derivatives. The polypeptide is Lipoyl synthase (Corynebacterium aurimucosum (strain ATCC 700975 / DSM 44827 / CIP 107346 / CN-1) (Corynebacterium nigricans)).